We begin with the raw amino-acid sequence, 202 residues long: Ribonuclease HII (202 aa).

Residues 13–202 form the RNase H type-2 domain; sequence KIEAGLDEAG…HFKPKQLDLF (190 aa). The a divalent metal cation site is built by aspartate 19, glutamate 20, and aspartate 112.

This sequence belongs to the RNase HII family. It depends on Mn(2+) as a cofactor. The cofactor is Mg(2+).

The protein localises to the cytoplasm. The enzyme catalyses Endonucleolytic cleavage to 5'-phosphomonoester.. Functionally, endonuclease that specifically degrades the RNA of RNA-DNA hybrids. The sequence is that of Ribonuclease HII from Cytophaga hutchinsonii (strain ATCC 33406 / DSM 1761 / CIP 103989 / NBRC 15051 / NCIMB 9469 / D465).